The primary structure comprises 689 residues: Centrosomal protein of 78 kDa (689 aa).

Residues S325 and S327 each carry the phosphoserine modification. Disordered regions lie at residues 432-451, 563-589, and 614-689; these read SSEVEEVDDSSESVHEVPEK, PQMTSTVSNPPKEEKKALEDEKPEPKQ, and DSFP…TESH. Positions 450 to 505 form a coiled coil; that stretch reads EKTSIEQEALQEKLEECLKQLKEERVIRLKVDKRVSELEHENAQLRNINFSLSEAL. Basic and acidic residues-rich tracts occupy residues 573 to 587 and 666 to 689; these read PKEEKKALEDEKPEP and QRKEEELSRNSRSSSEKKTKTESH.

The protein belongs to the CEP78 family. In terms of assembly, interacts with PLK4. Interacts with FAM161A. Interacts with IFT20; regulating IFT20 stability and localization. Interacts with TTC21A; regulating TTC21A stability and localization. Interacts with USP16; promoting USP16-dependent deubiquitination of tektins. Interacts with DCAF1/VPRBP; promoting localization of the EDVP complex to centrosomes. Interacts with CEP350; promoting CEP78 localization to centrosome and centriole. Widely expressed. Expressed in different retinal cell types with higher expression in cone compared to rod cells (at protein level).

The protein resides in the cytoplasm. It localises to the cytoskeleton. It is found in the microtubule organizing center. Its subcellular location is the centrosome. The protein localises to the centriole. The protein resides in the cilium basal body. In terms of biological role, centriole wall protein that localizes to mature centrioles and regulates centriole and cilia biogenesis. Involved in centrosome duplication: required for efficient PLK4 centrosomal localization and PLK4-induced overduplication of centrioles. Involved in cilium biogenesis and controls cilium length. Acts as a regulator of protein stability by preventing ubiquitination of centrosomal proteins, such as CCP110 and tektins. Associates with the EDVP complex, preventing ubiquitination and degradation of CCP110. Promotes deubiquitination of tektin proteins (TEKT1, TEKT2, TEK3, TEKT4 and TEKT5) via its interaction with USP16. The protein is Centrosomal protein of 78 kDa of Homo sapiens (Human).